Reading from the N-terminus, the 523-residue chain is Probable DNA ligase (523 aa).

Residue glutamate 210 coordinates ATP. Lysine 212 acts as the N6-AMP-lysine intermediate in catalysis. ATP-binding residues include arginine 217, arginine 232, glutamate 261, phenylalanine 317, arginine 388, and lysine 394.

It belongs to the ATP-dependent DNA ligase family. It depends on Mg(2+) as a cofactor.

It carries out the reaction ATP + (deoxyribonucleotide)n-3'-hydroxyl + 5'-phospho-(deoxyribonucleotide)m = (deoxyribonucleotide)n+m + AMP + diphosphate.. DNA ligase that seals nicks in double-stranded DNA during DNA replication, DNA recombination and DNA repair. The protein is Probable DNA ligase of Nocardia farcinica (strain IFM 10152).